Reading from the N-terminus, the 146-residue chain is uncharacterized protein (146 aa).

One can recognise an HTH marR-type domain in the interval 1-137; that stretch reads MLSQEFFNSF…TINVMNQIHE (137 aa).

This is an uncharacterized protein from Staphylococcus aureus (strain MRSA252).